The primary structure comprises 305 residues: Glycine--tRNA ligase alpha subunit (305 aa).

Belongs to the class-II aminoacyl-tRNA synthetase family. As to quaternary structure, tetramer of two alpha and two beta subunits.

It localises to the cytoplasm. It carries out the reaction tRNA(Gly) + glycine + ATP = glycyl-tRNA(Gly) + AMP + diphosphate. In Streptococcus suis (strain 05ZYH33), this protein is Glycine--tRNA ligase alpha subunit.